We begin with the raw amino-acid sequence, 312 residues long: Malate dehydrogenase (312 aa).

Residues 7–13 (GAAGGIG) and Asp-34 each bind NAD(+). Arg-81 and Arg-87 together coordinate substrate. NAD(+)-binding positions include Asn-94 and 117–119 (ITN). 2 residues coordinate substrate: Asn-119 and Arg-153. Catalysis depends on His-177, which acts as the Proton acceptor. Position 227 (Met-227) interacts with NAD(+).

This sequence belongs to the LDH/MDH superfamily. MDH type 1 family. In terms of assembly, homodimer.

The catalysed reaction is (S)-malate + NAD(+) = oxaloacetate + NADH + H(+). Its function is as follows. Catalyzes the reversible oxidation of malate to oxaloacetate. The polypeptide is Malate dehydrogenase (Escherichia coli (strain ATCC 8739 / DSM 1576 / NBRC 3972 / NCIMB 8545 / WDCM 00012 / Crooks)).